Here is a 378-residue protein sequence, read N- to C-terminus: Alanine racemase (378 aa).

Catalysis depends on Lys40, which acts as the Proton acceptor; specific for D-alanine. An N6-(pyridoxal phosphate)lysine modification is found at Lys40. Substrate is bound at residue Arg140. Tyr270 functions as the Proton acceptor; specific for L-alanine in the catalytic mechanism. A substrate-binding site is contributed by Met317.

Belongs to the alanine racemase family. Pyridoxal 5'-phosphate is required as a cofactor.

The enzyme catalyses L-alanine = D-alanine. It functions in the pathway amino-acid biosynthesis; D-alanine biosynthesis; D-alanine from L-alanine: step 1/1. Its function is as follows. Catalyzes the interconversion of L-alanine and D-alanine. May also act on other amino acids. The chain is Alanine racemase (alr) from Lacticaseibacillus paracasei (strain ATCC 334 / BCRC 17002 / CCUG 31169 / CIP 107868 / KCTC 3260 / NRRL B-441) (Lactobacillus paracasei).